The following is a 251-amino-acid chain: CDP-diacylglycerol pyrophosphatase (251 aa).

Residues 5–25 traverse the membrane as a helical segment; the sequence is GYFLLAVIVIVAAAGVGYWKF.

The protein belongs to the Cdh family.

The protein resides in the cell inner membrane. The enzyme catalyses a CDP-1,2-diacyl-sn-glycerol + H2O = a 1,2-diacyl-sn-glycero-3-phosphate + CMP + 2 H(+). The protein operates within phospholipid metabolism; CDP-diacylglycerol degradation; phosphatidate from CDP-diacylglycerol: step 1/1. The protein is CDP-diacylglycerol pyrophosphatase of Salmonella enteritidis PT4 (strain P125109).